The primary structure comprises 119 residues: Ribonuclease P protein component (119 aa).

It belongs to the RnpA family. In terms of assembly, consists of a catalytic RNA component (M1 or rnpB) and a protein subunit.

The enzyme catalyses Endonucleolytic cleavage of RNA, removing 5'-extranucleotides from tRNA precursor.. In terms of biological role, RNaseP catalyzes the removal of the 5'-leader sequence from pre-tRNA to produce the mature 5'-terminus. It can also cleave other RNA substrates such as 4.5S RNA. The protein component plays an auxiliary but essential role in vivo by binding to the 5'-leader sequence and broadening the substrate specificity of the ribozyme. The sequence is that of Ribonuclease P protein component from Borreliella burgdorferi (strain ATCC 35210 / DSM 4680 / CIP 102532 / B31) (Borrelia burgdorferi).